The chain runs to 364 residues: Histidinol-phosphate aminotransferase (364 aa).

Lys-224 is subject to N6-(pyridoxal phosphate)lysine.

This sequence belongs to the class-II pyridoxal-phosphate-dependent aminotransferase family. Histidinol-phosphate aminotransferase subfamily. As to quaternary structure, homodimer. Pyridoxal 5'-phosphate serves as cofactor.

The enzyme catalyses L-histidinol phosphate + 2-oxoglutarate = 3-(imidazol-4-yl)-2-oxopropyl phosphate + L-glutamate. It participates in amino-acid biosynthesis; L-histidine biosynthesis; L-histidine from 5-phospho-alpha-D-ribose 1-diphosphate: step 7/9. The polypeptide is Histidinol-phosphate aminotransferase (Anaeromyxobacter sp. (strain Fw109-5)).